Here is a 536-residue protein sequence, read N- to C-terminus: Interferon alpha/beta receptor 2 (536 aa).

The N-terminal stretch at 1–26 (MLLSQNVSAIGPLNLYPMVHISLVFG) is a signal peptide. The Extracellular portion of the chain corresponds to 27–246 (ISYVVPDLSD…RESESSEPAT (220 aa)). 2 disulfides stabilise this stretch: cysteine 39/cysteine 122 and cysteine 85/cysteine 93. Residues asparagine 58, asparagine 87, asparagine 101, asparagine 147, and asparagine 191 are each glycosylated (N-linked (GlcNAc...) asparagine). Cysteine 210 and cysteine 230 form a disulfide bridge. A helical membrane pass occupies residues 247-267 (IGGILILFLLAAVCISTVMIL). At 268–536 (KRIGYICLRN…VRQVNLKNFN (269 aa)) the chain is on the cytoplasmic side. A Phosphotyrosine modification is found at tyrosine 340. Tandem repeats lie at residues 358–362 (SLEDC), 363–367 (SLEDC), and 368–372 (SLEDC). Residues 358 to 372 (SLEDCSLEDCSLEDC) are 3 X 5 AA tandem repeats of S-L-E-D-C. Residues 369–434 (LEDCSDPSAE…SDSTEGSEGR (66 aa)) form a disordered region. A compositionally biased stretch (acidic residues) spans 420-429 (TSEEDSDSTE). Residues 432 to 456 (EGRIVFNVNLNSVCVRALEDDKDSE) form a mediates interaction with STAT2 (and required for the recruitment of USP18) region. Residue serine 480 is modified to Phosphoserine. The tract at residues 487–522 (EEGTQLPFTDPSMECLRPQDALSDKSDTSESDVDIG) is disordered. Tyrosine 525 is modified (phosphotyrosine).

This sequence belongs to the type II cytokine receptor family. In terms of assembly, heterodimer with IFNAR1; forming the receptor for type I interferon. Interacts with the transcriptional factors STAT1 and STAT2. Interacts with JAK1. Interacts with USP18; indirectly via STAT2, it negatively regulates the assembly of the ternary interferon-IFNAR1-IFNAR2 complex and therefore type I interferon signaling. In terms of processing, phosphorylated on tyrosine residues upon interferon binding. Phosphorylation at Tyr-340 or Tyr-525 are sufficient to mediate interferon dependent activation of STAT1, STAT2 and STAT3 leading to antiproliferative effects on many different cell types. In terms of tissue distribution, expressed in the endometrium. Expressed in all tissues examined except conceptus at day 15 of pregnancy.

Its subcellular location is the cell membrane. Functionally, together with IFNAR1, forms the heterodimeric receptor for type I interferons (including interferons alpha, beta, epsilon, omega and kappa). Type I interferon binding activates the JAK-STAT signaling cascade, resulting in transcriptional activation or repression of interferon-regulated genes that encode the effectors of the interferon response. Mechanistically, type I interferon-binding brings the IFNAR1 and IFNAR2 subunits into close proximity with one another, driving their associated Janus kinases (JAKs) (TYK2 bound to IFNAR1 and JAK1 bound to IFNAR2) to cross-phosphorylate one another. The activated kinases phosphorylate specific tyrosine residues on the intracellular domains of IFNAR1 and IFNAR2, forming docking sites for the STAT transcription factors (STAT1, STAT2 and STAT). STAT proteins are then phosphorylated by the JAKs, promoting their translocation into the nucleus to regulate expression of interferon-regulated genes. This chain is Interferon alpha/beta receptor 2 (IFNAR2), found in Ovis aries (Sheep).